Here is a 552-residue protein sequence, read N- to C-terminus: Phosphoribosylaminoimidazole carboxylase (552 aa).

Residues 108–295 (KQHLQVFKIA…QFEAHLRAIC (188 aa)) form the ATP-grasp domain. 134–189 (GQEFGYPFVLKSKTLAYDGRGNYVVHQPSEIPTAIKALGDRPLYVEKFVPFSMEIA) provides a ligand contact to ATP.

In the C-terminal section; belongs to the AIR carboxylase family. Class I subfamily.

The enzyme catalyses 5-amino-1-(5-phospho-D-ribosyl)imidazole-4-carboxylate + H(+) = 5-amino-1-(5-phospho-beta-D-ribosyl)imidazole + CO2. It participates in purine metabolism; IMP biosynthesis via de novo pathway; 5-amino-1-(5-phospho-D-ribosyl)imidazole-4-carboxylate from 5-amino-1-(5-phospho-D-ribosyl)imidazole (carboxylase route): step 1/1. The polypeptide is Phosphoribosylaminoimidazole carboxylase (ade6) (Schizosaccharomyces pombe (strain 972 / ATCC 24843) (Fission yeast)).